We begin with the raw amino-acid sequence, 175 residues long: Transcriptional activatory protein BadR (175 aa).

Residues 20–156 (ANRLFFRLYQ…TLHYLLKILD (137 aa)) enclose the HTH marR-type domain.

Functionally, transcriptional activator of genes for the anaerobic degradation of benzoate. In Rhodopseudomonas palustris (strain ATCC BAA-98 / CGA009), this protein is Transcriptional activatory protein BadR (badR).